We begin with the raw amino-acid sequence, 239 residues long: Transcriptional regulatory protein DcuR (239 aa).

Residues Asn3–Arg121 form the Response regulatory domain. Asp56 is modified (4-aspartylphosphate). Residues Thr181 to Ile200 constitute a DNA-binding region (H-T-H motif).

Phosphorylated and activated by DcuS.

The protein localises to the cytoplasm. Functionally, member of the two-component regulatory system DcuR/DcuS. Involved in the C4-dicarboxylate-stimulated regulation of the genes encoding the anaerobic fumarate respiratory system (frdABCD; nuoAN; dcuB; dcuC; sdhCDAB; etc.). Weakly regulates the aerobic C4-dicarboxylate transporter dctA. The sequence is that of Transcriptional regulatory protein DcuR (dcuR) from Escherichia coli O6:H1 (strain CFT073 / ATCC 700928 / UPEC).